Here is a 220-residue protein sequence, read N- to C-terminus: Cytidylate kinase (220 aa).

11-19 contributes to the ATP binding site; it reads GPTASGKGT.

Belongs to the cytidylate kinase family. Type 1 subfamily.

It localises to the cytoplasm. It catalyses the reaction CMP + ATP = CDP + ADP. It carries out the reaction dCMP + ATP = dCDP + ADP. The polypeptide is Cytidylate kinase (Polynucleobacter asymbioticus (strain DSM 18221 / CIP 109841 / QLW-P1DMWA-1) (Polynucleobacter necessarius subsp. asymbioticus)).